Consider the following 495-residue polypeptide: tRNA-guanine(15) transglycosylase (495 aa).

The active-site Nucleophile is the Asp-83. Asp-118 is a substrate binding site. Zn(2+) is bound by residues Cys-273 and Cys-278.

It belongs to the archaeosine tRNA-ribosyltransferase family. Zn(2+) is required as a cofactor.

It carries out the reaction guanosine(15) in tRNA + 7-cyano-7-deazaguanine = 7-cyano-7-carbaguanosine(15) in tRNA + guanine. Its pathway is tRNA modification; archaeosine-tRNA biosynthesis. Exchanges the guanine residue with 7-cyano-7-deazaguanine (preQ0) at position 15 in the dihydrouridine loop (D-loop) of archaeal tRNAs. The polypeptide is tRNA-guanine(15) transglycosylase (Pyrobaculum aerophilum (strain ATCC 51768 / DSM 7523 / JCM 9630 / CIP 104966 / NBRC 100827 / IM2)).